Consider the following 343-residue polypeptide: Major capsid protein VP1 (343 aa).

This sequence belongs to the polyomaviruses coat protein VP1 family. In terms of assembly, homomultimer; disulfide-linked. The virus capsid is composed of 72 icosahedral units, each one composed of five disulfide-linked copies of VP1. Interacts with minor capsid proteins VP2 and VP3.

The protein localises to the virion. It is found in the host nucleus. Forms an icosahedral capsid with a T=7 symmetry and a 46-48 nm diameter. The capsid is composed of 72 pentamers linked to each other by disulfide bonds and associated with VP2 or VP3 proteins. Interacts with sialic acids on the cell surface to provide virion attachment to target cell. Once attached, the virion is internalized by endocytosis and traffics to the endoplasmic reticulum. Inside the endoplasmic reticulum, the protein folding machinery isomerizes VP1 interpentamer disulfide bonds, thereby triggering initial uncoating. Next, the virion uses the endoplasmic reticulum-associated degradation machinery to probably translocate in the cytosol before reaching the nucleus. Nuclear entry of the viral DNA involves the selective exposure and importin recognition of VP2/Vp3 nuclear localization signal. In late phase of infection, neo-synthesized VP1 encapsulates replicated genomic DNA in the nucleus, and participates in rearranging nucleosomes around the viral DNA. In Psittacidae (parrots), this protein is Major capsid protein VP1.